The chain runs to 130 residues: Fluoride-specific ion channel FluC 2 (130 aa).

4 helical membrane-spanning segments follow: residues 4 to 24, 38 to 58, 72 to 92, and 103 to 123; these read GLST…GAIC, NLWG…FFLA, LYLL…SLIL, and WMEL…FISL. Residues Gly-82 and Ser-85 each contribute to the Na(+) site.

This sequence belongs to the fluoride channel Fluc/FEX (TC 1.A.43) family.

The protein localises to the cell inner membrane. The catalysed reaction is fluoride(in) = fluoride(out). Its activity is regulated as follows. Na(+) is not transported, but it plays an essential structural role and its presence is essential for fluoride channel function. Functionally, fluoride-specific ion channel. Important for reducing fluoride concentration in the cell, thus reducing its toxicity. The chain is Fluoride-specific ion channel FluC 2 from Prochlorococcus marinus (strain SARG / CCMP1375 / SS120).